Consider the following 477-residue polypeptide: Ribulose bisphosphate carboxylase large chain (477 aa).

A propeptide spanning residues 1–2 is cleaved from the precursor; it reads MS. Residue Pro3 is modified to N-acetylproline. Lys14 carries the post-translational modification N6,N6,N6-trimethyllysine. Substrate-binding residues include Asn123 and Thr173. Lys175 serves as the catalytic Proton acceptor. Substrate is bound at residue Lys177. Residues Lys201, Asp203, and Glu204 each contribute to the Mg(2+) site. Lys201 bears the N6-carboxylysine mark. His294 acts as the Proton acceptor in catalysis. 3 residues coordinate substrate: Arg295, His327, and Ser379.

This sequence belongs to the RuBisCO large chain family. Type I subfamily. As to quaternary structure, heterohexadecamer of 8 large chains and 8 small chains; disulfide-linked. The disulfide link is formed within the large subunit homodimers. Mg(2+) serves as cofactor. The disulfide bond which can form in the large chain dimeric partners within the hexadecamer appears to be associated with oxidative stress and protein turnover.

The protein localises to the plastid. It is found in the chloroplast. It catalyses the reaction 2 (2R)-3-phosphoglycerate + 2 H(+) = D-ribulose 1,5-bisphosphate + CO2 + H2O. The catalysed reaction is D-ribulose 1,5-bisphosphate + O2 = 2-phosphoglycolate + (2R)-3-phosphoglycerate + 2 H(+). RuBisCO catalyzes two reactions: the carboxylation of D-ribulose 1,5-bisphosphate, the primary event in carbon dioxide fixation, as well as the oxidative fragmentation of the pentose substrate in the photorespiration process. Both reactions occur simultaneously and in competition at the same active site. The sequence is that of Ribulose bisphosphate carboxylase large chain from Digitalis purpurea (Common foxglove).